A 474-amino-acid polypeptide reads, in one-letter code: Aspartyl/glutamyl-tRNA(Asn/Gln) amidotransferase subunit B (474 aa).

It belongs to the GatB/GatE family. GatB subfamily. As to quaternary structure, heterotrimer of A, B and C subunits.

The enzyme catalyses L-glutamyl-tRNA(Gln) + L-glutamine + ATP + H2O = L-glutaminyl-tRNA(Gln) + L-glutamate + ADP + phosphate + H(+). It carries out the reaction L-aspartyl-tRNA(Asn) + L-glutamine + ATP + H2O = L-asparaginyl-tRNA(Asn) + L-glutamate + ADP + phosphate + 2 H(+). In terms of biological role, allows the formation of correctly charged Asn-tRNA(Asn) or Gln-tRNA(Gln) through the transamidation of misacylated Asp-tRNA(Asn) or Glu-tRNA(Gln) in organisms which lack either or both of asparaginyl-tRNA or glutaminyl-tRNA synthetases. The reaction takes place in the presence of glutamine and ATP through an activated phospho-Asp-tRNA(Asn) or phospho-Glu-tRNA(Gln). This chain is Aspartyl/glutamyl-tRNA(Asn/Gln) amidotransferase subunit B, found in Wolbachia sp. subsp. Brugia malayi (strain TRS).